We begin with the raw amino-acid sequence, 352 residues long: Small ribosomal subunit biogenesis GTPase RsgA (352 aa).

A compositionally biased stretch (basic residues) spans 1–21 (MKKNKLSKNQHRRIQAHHQYR). A disordered region spans residues 1–38 (MKKNKLSKNQHRRIQAHHQYRLHPTSLTDDKNNQLDDA). Residues 116–278 (FYDGIKPMAA…LIDSPGIREF (163 aa)) enclose the CP-type G domain. GTP is bound by residues 164 to 167 (NKID) and 218 to 226 (GQSGVGKSS). Cys302, Cys307, His309, and Cys315 together coordinate Zn(2+).

It belongs to the TRAFAC class YlqF/YawG GTPase family. RsgA subfamily. As to quaternary structure, monomer. Associates with 30S ribosomal subunit, binds 16S rRNA. Zn(2+) serves as cofactor.

The protein localises to the cytoplasm. In terms of biological role, one of several proteins that assist in the late maturation steps of the functional core of the 30S ribosomal subunit. Helps release RbfA from mature subunits. May play a role in the assembly of ribosomal proteins into the subunit. Circularly permuted GTPase that catalyzes slow GTP hydrolysis, GTPase activity is stimulated by the 30S ribosomal subunit. The protein is Small ribosomal subunit biogenesis GTPase RsgA of Hamiltonella defensa subsp. Acyrthosiphon pisum (strain 5AT).